The primary structure comprises 748 residues: Photosystem I P700 chlorophyll a apoprotein A1 (748 aa).

8 helical membrane-spanning segments follow: residues 70–93 (VFSA…FHGA), 156–179 (LYST…YHYH), 195–219 (LNHH…HVSL), 291–309 (TAHH…GHQY), 346–369 (WHAQ…HHMY), 385–411 (LSLF…IFLV), 433–455 (AIIS…LYIH), and 530–548 (FLVH…LILL). 2 residues coordinate [4Fe-4S] cluster: Cys-572 and Cys-581. 2 consecutive transmembrane segments (helical) span residues 588 to 609 (HVFL…HFSW) and 662 to 684 (LSAY…MFLF). His-673 serves as a coordination point for chlorophyll a'. The chlorophyll a site is built by Met-681 and Tyr-689. Phylloquinone is bound at residue Trp-690. The helical transmembrane segment at 722-742 (AVGVAHYLLGGIATTWAFFLA) threads the bilayer.

The protein belongs to the PsaA/PsaB family. The PsaA/B heterodimer binds the P700 chlorophyll special pair and subsequent electron acceptors. PSI consists of a core antenna complex that captures photons, and an electron transfer chain that converts photonic excitation into a charge separation. The eukaryotic PSI reaction center is composed of at least 11 subunits. It depends on P700 is a chlorophyll a/chlorophyll a' dimer, A0 is one or more chlorophyll a, A1 is one or both phylloquinones and FX is a shared 4Fe-4S iron-sulfur center. as a cofactor.

The protein localises to the plastid. Its subcellular location is the chloroplast thylakoid membrane. The enzyme catalyses reduced [plastocyanin] + hnu + oxidized [2Fe-2S]-[ferredoxin] = oxidized [plastocyanin] + reduced [2Fe-2S]-[ferredoxin]. In terms of biological role, psaA and PsaB bind P700, the primary electron donor of photosystem I (PSI), as well as the electron acceptors A0, A1 and FX. PSI is a plastocyanin-ferredoxin oxidoreductase, converting photonic excitation into a charge separation, which transfers an electron from the donor P700 chlorophyll pair to the spectroscopically characterized acceptors A0, A1, FX, FA and FB in turn. Oxidized P700 is reduced on the lumenal side of the thylakoid membrane by plastocyanin. The chain is Photosystem I P700 chlorophyll a apoprotein A1 from Chaetosphaeridium globosum (Charophycean green alga).